The following is a 295-amino-acid chain: Probable intramembrane protease C25B8.17 (295 aa).

The chain crosses the membrane as a helical span at residues 1 to 21 (MEGVILASSALFTVYIGAKWS). Residues 22 to 35 (AQEEEPEEKQLINK) lie on the Cytoplasmic side of the membrane. A helical transmembrane segment spans residues 36–56 (RLAVLFPIFGGVTLVLMYLAL). Topologically, residues 57–63 (RYLSKEY) are lumenal. The helical transmembrane segment at 64–84 (IQLILQGYASLASIICFVRSF) threads the bilayer. Topologically, residues 85–89 (NPKTT) are cytoplasmic. A helical transmembrane segment spans residues 90–106 (FGKITATMSSIAIALFY). Over 107 to 111 (FKTKH) the chain is Lumenal. A helical transmembrane segment spans residues 112-130 (WMASNILAWALAANSISIM). Residues 131-139 (RIDSYNTGA) lie on the Cytoplasmic side of the membrane. The helical transmembrane segment at 140-160 (LLLGALFFYDIYFVFGTEVMV) threads the bilayer. The active site involves Asp149. At 161-183 (TVATGIDIPAKYVLPQFKNPTRL) the chain is on the lumenal side. A helical membrane pass occupies residues 184–204 (SMLGLGDIVMPGLMLALMYRF). Asp190 is an active-site residue. Residues 205 to 221 (DLHYYINSTSQPKKHST) are Cytoplasmic-facing. Residues 222–244 (YFRNTFIAYGLGLGVTNFALYYF) traverse the membrane as a helical segment. The Lumenal segment spans residues 245 to 249 (KAAQP). Residues 249 to 251 (PAL) carry the PAL motif. Residues 250-268 (ALLYLSPACIVAPLLTAWY) traverse the membrane as a helical segment. The Cytoplasmic segment spans residues 269-295 (RDELKTLFSFRSETEDETDEQDKCKST).

Belongs to the peptidase A22B family.

Its subcellular location is the endoplasmic reticulum membrane. It localises to the golgi apparatus membrane. This Schizosaccharomyces pombe (strain 972 / ATCC 24843) (Fission yeast) protein is Probable intramembrane protease C25B8.17.